A 440-amino-acid polypeptide reads, in one-letter code: Probable exopolygalacturonase C (440 aa).

An N-terminal signal peptide occupies residues 1 to 21; sequence MLITNPALLGILASLVPLALG. 2 N-linked (GlcNAc...) asparagine glycosylation sites follow: Asn84 and Asn151. 3 PbH1 repeats span residues 188–210, 217–238, and 240–261; these read GDDITVSHAIVDATSTGGFPFNT, GTNISITDSVMFNGDDAIAVNT, and SHNIVFARNTIGYQSHGMSIGS. The N-linked (GlcNAc...) asparagine glycan is linked to Asn219. The active-site Proton donor is Asp231. His255 is a catalytic residue. N-linked (GlcNAc...) asparagine glycosylation is present at Asn271. The PbH1 4 repeat unit spans residues 272–293; that stretch reads ITNLRFEDVTVIDALYAARFKS. A glycan (N-linked (GlcNAc...) asparagine) is linked at Asn313. A disulfide bridge links Cys389 with Cys395. A glycan (N-linked (GlcNAc...) asparagine) is linked at Asn434.

The protein belongs to the glycosyl hydrolase 28 family.

It is found in the secreted. The catalysed reaction is [(1-&gt;4)-alpha-D-galacturonosyl](n) + H2O = alpha-D-galacturonate + [(1-&gt;4)-alpha-D-galacturonosyl](n-1). Its function is as follows. Specific in hydrolyzing the terminal glycosidic bond of polygalacturonic acid and oligogalacturonates. The sequence is that of Probable exopolygalacturonase C (pgxC) from Aspergillus fumigatus (strain CBS 144.89 / FGSC A1163 / CEA10) (Neosartorya fumigata).